The sequence spans 54 residues: UPF0391 membrane protein Reut_A0124 (54 aa).

2 helical membrane-spanning segments follow: residues 5-25 and 30-50; these read ALVF…GIAA and IAKI…VMGL.

This sequence belongs to the UPF0391 family.

The protein resides in the cell membrane. In Cupriavidus pinatubonensis (strain JMP 134 / LMG 1197) (Cupriavidus necator (strain JMP 134)), this protein is UPF0391 membrane protein Reut_A0124.